A 245-amino-acid chain; its full sequence is tRNA1(Val) (adenine(37)-N6)-methyltransferase (245 aa).

It belongs to the methyltransferase superfamily. tRNA (adenine-N(6)-)-methyltransferase family.

The protein resides in the cytoplasm. It catalyses the reaction adenosine(37) in tRNA1(Val) + S-adenosyl-L-methionine = N(6)-methyladenosine(37) in tRNA1(Val) + S-adenosyl-L-homocysteine + H(+). Functionally, specifically methylates the adenine in position 37 of tRNA(1)(Val) (anticodon cmo5UAC). This Escherichia coli O6:K15:H31 (strain 536 / UPEC) protein is tRNA1(Val) (adenine(37)-N6)-methyltransferase.